The following is a 53-amino-acid chain: LALLFLVLSAGSGISGPLSCRRKGGICILIRCPGPMRQIGTCFGRPVKCCRSW.

Disulfide bonds link Cys-20/Cys-49, Cys-27/Cys-42, and Cys-32/Cys-50.

Belongs to the beta-defensin family.

Its subcellular location is the secreted. Functionally, has bactericidal activity. In Bos taurus (Bovine), this protein is Beta-defensin C7.